The following is a 561-amino-acid chain: MKKVWLNRYPADVPTEINPDRYQSLVDMFEQSVARYADQPAFVNMGEVMTFRKLEERSRAFAAYLQQGLGLKKGDRVALMMPNLLQYPVALFGILRAGMIVVNVNPLYTPRELEHQLNDSGASAIVIVSNFAHTLEKVVDKTAVQHVILTRMGDQLSTAKGTLVNFVVKYIKRLVPKYHLPDAISFRSALHNGYRMQYVKPELVPEDLAFLQYTGGTTGVAKGAMLTHRNMLANLEQVNATYGPLLHPGKELVVTALPLYHIFALTINCLLFIELGGQNLLITNPRDIPGLVKELAKYPFTAITGVNTLFNALLNNKEFQQLDFSSLHLSAGGGMPVQQVVAERWVKLTGQYLLEGYGLTECAPLVSVNPYDIDYHSGSIGLPVPSTEAKLVDDDDNEVSPGQPGELCVRGPQVMLGYWQRPDATDEIIKNGWLHTGDIAVMDEEGFLRIVDRKKDMILVSGFNVYPNEIEDVVMQHPGVQEVAAVGVPSGSSGEAVKIFVVKKDPSLTEESLVTFCRRQLTGYKVPKLVEFRDELPKSNVGKILRRELRDEARGKVDNKA.

ATP is bound at residue 213 to 224 (YTGGTTGVAKGA).

It belongs to the ATP-dependent AMP-binding enzyme family. Requires Mg(2+) as cofactor.

The protein resides in the membrane. The enzyme catalyses a long-chain fatty acid + ATP + CoA = a long-chain fatty acyl-CoA + AMP + diphosphate. The protein operates within lipid metabolism; fatty acid beta-oxidation. Functionally, catalyzes the esterification, concomitant with transport, of exogenous long-chain fatty acids into metabolically active CoA thioesters for subsequent degradation or incorporation into phospholipids. In Escherichia coli O157:H7, this protein is Long-chain-fatty-acid--CoA ligase (fadD).